A 274-amino-acid chain; its full sequence is Putative pyruvate, phosphate dikinase regulatory protein 1 (274 aa).

Position 149–156 (149–156 (GISRTSKT)) interacts with ADP.

It belongs to the pyruvate, phosphate/water dikinase regulatory protein family. PDRP subfamily.

The catalysed reaction is N(tele)-phospho-L-histidyl/L-threonyl-[pyruvate, phosphate dikinase] + ADP = N(tele)-phospho-L-histidyl/O-phospho-L-threonyl-[pyruvate, phosphate dikinase] + AMP + H(+). The enzyme catalyses N(tele)-phospho-L-histidyl/O-phospho-L-threonyl-[pyruvate, phosphate dikinase] + phosphate + H(+) = N(tele)-phospho-L-histidyl/L-threonyl-[pyruvate, phosphate dikinase] + diphosphate. Functionally, bifunctional serine/threonine kinase and phosphorylase involved in the regulation of the pyruvate, phosphate dikinase (PPDK) by catalyzing its phosphorylation/dephosphorylation. This is Putative pyruvate, phosphate dikinase regulatory protein 1 from Listeria monocytogenes serotype 4b (strain F2365).